We begin with the raw amino-acid sequence, 368 residues long: Leu/Ile/Val-binding protein homolog 3 (368 aa).

The signal sequence occupies residues 1-23; the sequence is MNLKLLSSVAFAATIGFASAAYA.

This sequence belongs to the leucine-binding protein family.

In terms of biological role, component of an amino-acid transport system. The protein is Leu/Ile/Val-binding protein homolog 3 of Brucella melitensis biotype 1 (strain ATCC 23456 / CCUG 17765 / NCTC 10094 / 16M).